We begin with the raw amino-acid sequence, 459 residues long: Nucleobindin-1 (459 aa).

An N-terminal signal peptide occupies residues 1 to 25 (MPTSVPRGAPFLLLPPLLMLSAVLA). A Phosphoserine modification is found at serine 85. Threonine 147 carries the post-translational modification Phosphothreonine. Residues 149 to 217 (EARDLELLIQ…QQRRHREHPK (69 aa)) are a coiled coil. Residues 171–217 (HHEEFKRYEMLKEHERRRYLESLGEEQRKEAERKLQEQQRRHREHPK) mediate DNA binding. Basic and acidic residues predominate over residues 192 to 209 (SLGEEQRKEAERKLQEQQ). The tract at residues 192 to 220 (SLGEEQRKEAERKLQEQQRRHREHPKVNV) is disordered. Residues 227–320 (LKEVWEELDG…VTLEEFLAST (94 aa)) form a binds to GNAI2 and GNAI3 region. EF-hand domains lie at 239 to 274 (PNRFNPKTFFILHDINSDGVLDEQELEALFTKELEK) and 291 to 326 (ERLRMREHVMKNVDTNQDRLVTLEEFLASTQRKEFG). Ca(2+)-binding residues include aspartate 252, asparagine 254, aspartate 256, glutamate 263, aspartate 304, asparagine 306, aspartate 308, and glutamate 315. The GBA signature appears at 302–332 (NVDTNQDRLVTLEEFLASTQRKEFGETAEGW). A coiled-coil region spans residues 340–407 (AYTEEELKRF…RKQQQQEQSA (68 aa)). Residue serine 368 is modified to Phosphoserine. A disordered region spans residues 393–459 (LQMEQRKQQQ…VLPQLDSQHL (67 aa)). Residues 433 to 445 (DQKDVPASEKKVP) show a composition bias toward basic and acidic residues. Position 456 is a phosphoserine (serine 456).

This sequence belongs to the nucleobindin family. Interacts (via GBA motif) with guanine nucleotide-binding protein G(i) alpha subunits GNAI1, GNAI2 and GNAI3 with higher affinity for GNAI1 and GNAI3 than for GNAI2. Preferentially interacts with inactive rather than active GNAI3. Interaction with GNAI3 is inhibited when NUCB1 binds calcium, probably due to a conformational change which renders the GBA motif inaccessible. As to expression, minor constituent of the mineralized matrix of bone. Detected in calvaria, rib cartilage, liver, kidney, spleen, brain, lung, skeletal and heart muscle with highest expression in calvaria and approximately half the amount in kidney, liver and brain.

The protein resides in the golgi apparatus. It is found in the cis-Golgi network membrane. It localises to the cytoplasm. Its subcellular location is the secreted. Functionally, major calcium-binding protein of the Golgi which may have a role in calcium homeostasis. Acts as a non-receptor guanine nucleotide exchange factor which binds to and activates alpha subunits of guanine nucleotide-binding proteins (G proteins). The protein is Nucleobindin-1 (Nucb1) of Rattus norvegicus (Rat).